Consider the following 731-residue polypeptide: Nucleolar GTP-binding protein 2 (731 aa).

An N-acetylmethionine modification is found at M1. The segment at 1–33 (MVKPKYKGRSTINPSKASTNPDRVQGAGGQNMR) is disordered. Polar residues predominate over residues 10 to 22 (STINPSKASTNPD). Residues 207–368 (WGELYKVIDS…LIDCPGVVYP (162 aa)) enclose the CP-type G domain. Residues 317 to 324 (GYPNVGKS) and 361 to 365 (DCPGV) each bind GTP. The interval 481–502 (VVPEAAQNNPGEEVTETAGEGS) is disordered. The residue at position 504 (S504) is a Phosphoserine. Positions 555-589 (LEEELESFSDEEEEEQEQQRDDAEESSSEPEEENV) are enriched in acidic residues. Disordered regions lie at residues 555–594 (LEEE…NDTK) and 630–731 (EKIF…RQKQ). Basic and acidic residues-rich tracts occupy residues 630–652 (EKIF…DRAP) and 662–671 (QREEEQEHSN). Basic residues-rich tracts occupy residues 681–695 (ERRR…KKVG) and 721–731 (KHKRKKFRQKQ).

It belongs to the TRAFAC class YlqF/YawG GTPase family. NOG2 subfamily. As to quaternary structure, interacts with LYAR and RPL23A. Interacts with the nuclear importin-beta receptor and, at a lower extent, with importin-alpha. As to expression, widely expressed, with the highest expression level in testis.

The protein localises to the nucleus. The protein resides in the nucleolus. Its function is as follows. GTPase that associates with pre-60S ribosomal subunits in the nucleolus and is required for their nuclear export and maturation. May promote cell proliferation possibly by increasing p53/TP53 protein levels, and consequently those of its downstream product CDKN1A/p21, and decreasing RPL23A protein levels. The sequence is that of Nucleolar GTP-binding protein 2 (GNL2) from Homo sapiens (Human).